The chain runs to 173 residues: MKREKKEQIVKDVAEKLQKAQGIYLTEFQGLDVEKMAELRNEFRKAGVEYQVAKNTLIKKALENVNGGDRLADGLVNTTGMAIGYDDPIAPAKIIEKFGKKNEMLKFKMATIDGSVFEADKLQVLSKMLSKTENIGRFAGMLNNVISSVPMVINAVMSDLVSVIDQVAKQKQD.

Belongs to the universal ribosomal protein uL10 family. Part of the ribosomal stalk of the 50S ribosomal subunit. The N-terminus interacts with L11 and the large rRNA to form the base of the stalk. The C-terminus forms an elongated spine to which L12 dimers bind in a sequential fashion forming a multimeric L10(L12)X complex.

Its function is as follows. Forms part of the ribosomal stalk, playing a central role in the interaction of the ribosome with GTP-bound translation factors. The chain is Large ribosomal subunit protein uL10 from Chlorobium phaeobacteroides (strain BS1).